Reading from the N-terminus, the 199-residue chain is UPF0301 protein Vapar_4617 (199 aa).

The protein belongs to the UPF0301 (AlgH) family.

The polypeptide is UPF0301 protein Vapar_4617 (Variovorax paradoxus (strain S110)).